Consider the following 149-residue polypeptide: D-aminoacyl-tRNA deacylase (149 aa).

Residues Gly137–Pro138 carry the Gly-cisPro motif, important for rejection of L-amino acids motif.

The protein belongs to the DTD family. Homodimer.

The protein localises to the cytoplasm. It catalyses the reaction glycyl-tRNA(Ala) + H2O = tRNA(Ala) + glycine + H(+). The enzyme catalyses a D-aminoacyl-tRNA + H2O = a tRNA + a D-alpha-amino acid + H(+). Functionally, an aminoacyl-tRNA editing enzyme that deacylates mischarged D-aminoacyl-tRNAs. Also deacylates mischarged glycyl-tRNA(Ala), protecting cells against glycine mischarging by AlaRS. Acts via tRNA-based rather than protein-based catalysis; rejects L-amino acids rather than detecting D-amino acids in the active site. By recycling D-aminoacyl-tRNA to D-amino acids and free tRNA molecules, this enzyme counteracts the toxicity associated with the formation of D-aminoacyl-tRNA entities in vivo and helps enforce protein L-homochirality. This chain is D-aminoacyl-tRNA deacylase, found in Clostridium botulinum (strain Loch Maree / Type A3).